A 159-amino-acid polypeptide reads, in one-letter code: Protein-export protein SecB (159 aa).

Belongs to the SecB family. Homotetramer, a dimer of dimers. One homotetramer interacts with 1 SecA dimer.

It localises to the cytoplasm. One of the proteins required for the normal export of preproteins out of the cell cytoplasm. It is a molecular chaperone that binds to a subset of precursor proteins, maintaining them in a translocation-competent state. It also specifically binds to its receptor SecA. The polypeptide is Protein-export protein SecB (Bartonella bacilliformis (strain ATCC 35685 / KC583 / Herrer 020/F12,63)).